A 249-amino-acid polypeptide reads, in one-letter code: Tumor necrosis factor ligand superfamily member 12 (249 aa).

The Cytoplasmic segment spans residues 1–21 (MAARRSQRRRGRRGEPGTALL). The chain crosses the membrane as a helical; Signal-anchor for type II membrane protein span at residues 22–42 (VPLALGLGLALACLGLLLAVV). Topologically, residues 43–249 (SLGSRASLSA…LTYFGLFQVH (207 aa)) are extracellular. The disordered stretch occupies residues 55 to 85 (PAQEELVAEEDQDPSELNPQTEESQDPAPFL). Acidic residues predominate over residues 56 to 68 (AQEELVAEEDQDP). One can recognise a THD domain in the interval 107–248 (IAAHYEVHPR…FLTYFGLFQV (142 aa)). A glycan (N-linked (GlcNAc...) asparagine) is linked at Asn-139. A disulfide bridge links Cys-191 with Cys-210.

This sequence belongs to the tumor necrosis factor family. In terms of assembly, homotrimer. Interacts with the angiogenic factor AGGF1/VG5Q. In terms of processing, the soluble form derives from the membrane form by proteolytic processing. As to expression, highly expressed in adult heart, pancreas, skeletal muscle, brain, colon, small intestine, lung, ovary, prostate, spleen, lymph node, appendix and peripheral blood lymphocytes. Low expression in kidney, testis, liver, placenta, thymus and bone marrow. Also detected in fetal kidney, liver, lung and brain.

It localises to the cell membrane. It is found in the secreted. In terms of biological role, binds to FN14 and possibly also to TNRFSF12/APO3. Weak inducer of apoptosis in some cell types. Mediates NF-kappa-B activation. Promotes angiogenesis and the proliferation of endothelial cells. Also involved in induction of inflammatory cytokines. Promotes IL8 secretion. This chain is Tumor necrosis factor ligand superfamily member 12 (TNFSF12), found in Homo sapiens (Human).